Here is a 216-residue protein sequence, read N- to C-terminus: MPQARGEGATPPTSLPNPSLKGVPLPDNPNNLEPLTREWLAAIGEDPDREGLQRTPQRVAKAWAYMTEGYGQTLAQVVGEGVFAAEGSEMVIVKDIEFYSMCEHHMLPFYGRAHVAYIPGTRILGLSKFARIVDLYSRRLQVQERITTQVADAVEELLAPKGVAVLMEGIHLCMAMRGVQKQNSSTTTSAMRGLFRSDPRTRAEFMSAVQGTLRGR.

Residues 1-33 (MPQARGEGATPPTSLPNPSLKGVPLPDNPNNLE) form a disordered region. Over residues 24-33 (PLPDNPNNLE) the composition is skewed to low complexity. Residues Cys-102, His-105, and Cys-173 each contribute to the Zn(2+) site.

Belongs to the GTP cyclohydrolase I family. As to quaternary structure, toroid-shaped homodecamer, composed of two pentamers of five dimers.

The enzyme catalyses GTP + H2O = 7,8-dihydroneopterin 3'-triphosphate + formate + H(+). The protein operates within cofactor biosynthesis; 7,8-dihydroneopterin triphosphate biosynthesis; 7,8-dihydroneopterin triphosphate from GTP: step 1/1. The chain is GTP cyclohydrolase 1 (folE) from Deinococcus radiodurans (strain ATCC 13939 / DSM 20539 / JCM 16871 / CCUG 27074 / LMG 4051 / NBRC 15346 / NCIMB 9279 / VKM B-1422 / R1).